Reading from the N-terminus, the 326-residue chain is DNA-directed RNA polymerase I subunit RPA43 (326 aa).

The disordered stretch occupies residues V179–N202. Low complexity predominate over residues T182 to N202. Phosphoserine is present on residues S244, S251, S265, S269, and S285. Over residues N288–N304 the composition is skewed to basic and acidic residues. The tract at residues N288–D326 is disordered. A compositionally biased stretch (acidic residues) spans V309–D326.

Belongs to the eukaryotic RPA43 RNA polymerase subunit family. In terms of assembly, component of the RNA polymerase I (Pol I) complex consisting of 14 subunits: RPA135, RPA190, RPC40, RPA14, RPB5, RPO26, RPA43, RPB8, RPA12, RPB10, RPC19, RPC10, RPA49 and RPA34. The complex is composed of a horseshoe-shaped core containing ten subunits (RPA135, RPA190, RPB5, RPO26, RPB8, RPB10, RPC10, RPA12, RPC19 and RPC40) where RPA135 and RPA190 form the DNA-binding cleft. Outside of the core, RPA14 and RPA43 form the stalk that mediates interactions with transcription initiation factors and newly synthesized RNA. Interacts with RPO26/ABC23 and with the initiation factor RRN3. In terms of processing, contains an average of four phosphates per molecule.

It is found in the nucleus. Its subcellular location is the nucleolus. Functionally, DNA-dependent RNA polymerases catalyze the transcription of DNA into RNA using the four ribonucleoside triphosphates as substrates. Component of RNA polymerase I (Pol I) which synthesizes ribosomal RNA precursors. Besides, RNA polymerase I has intrinsic RNA cleavage activity. Through its association with RRN3 is involved in recruitment of Pol I to rDNA promoters. In vitro, the A13-A43 subcomplex binds single-stranded RNA. This Saccharomyces cerevisiae (strain ATCC 204508 / S288c) (Baker's yeast) protein is DNA-directed RNA polymerase I subunit RPA43 (RPA43).